Here is a 247-residue protein sequence, read N- to C-terminus: ATP synthase delta chain, chloroplastic (247 aa).

A chloroplast-targeting transit peptide spans 1 to 60 (MAALRLASFTLRPAAAAAASASSGATPAAPRSASFARAARGLPSLRLAPPRRRGDLVRPR).

It belongs to the ATPase delta chain family. As to quaternary structure, F-type ATPases have 2 components, CF(1) - the catalytic core - and CF(0) - the membrane proton channel. CF(1) has five subunits: alpha(3), beta(3), gamma(1), delta(1), epsilon(1). CF(0) has three main subunits: a, b and c.

The protein localises to the plastid. It localises to the chloroplast thylakoid membrane. Functionally, this protein seems to be part of the stalk that links CF(0) to CF(1). It either transmits conformational changes from CF(0) into CF(1) or is implicated in proton conduction. The sequence is that of ATP synthase delta chain, chloroplastic (ATPD) from Sorghum bicolor (Sorghum).